The sequence spans 249 residues: Metallo-beta-lactamase type 2 (249 aa).

Positions 1–22 are cleaved as a signal peptide; the sequence is MLKRLKGLLVLALGFTGLQVFG. 5 residues coordinate Zn(2+): H98, H100, D102, H161, and C180. Residue K183 coordinates substrate. H222 is a binding site for Zn(2+).

The protein belongs to the metallo-beta-lactamase superfamily. Class-B beta-lactamase family. As to quaternary structure, monomer. Zn(2+) serves as cofactor.

It is found in the periplasm. It carries out the reaction a beta-lactam + H2O = a substituted beta-amino acid. Its function is as follows. Confers resistance to the different beta-lactams antibiotics (penicillin, cephalosporin and carbapenem) via the hydrolysis of the beta-lactam ring. This is Metallo-beta-lactamase type 2 (blaB5) from Elizabethkingia meningoseptica (Chryseobacterium meningosepticum).